A 661-amino-acid polypeptide reads, in one-letter code: MNPDLRRERDAASFDAEKLTYILDGGSERTRRRREIENLILNDPDFKHEDLNFLTRSERYEIAVRKSATMVKKMRDFGIADPEEIMWFKKPQLINFVEPVGLTYSMFIPTLLDQGTTAQQQKWLPPTQGLQIIGTYAQTEMGHGTHLRGLETTATYDPKTQEFILNSPTVTSIKWWPGGLGKTSNHAIVLAQLYTKGECYGLHAFIVPIREMGTHKPFPGIIVGDIGPKFGYDEMDNGYLKMDNYRIPRENMLMKYAQVKPDGTYVKPLSNKLTYGTMVFVRSFLVGEAARSLSKACTIAIRYSLIRHQSEIRPGDPEPQILDFQTQQYKLFPLLATAYAFQFVGAYMKETYHRINVDINQGNLNELPELHALTAGLKAFTSWTTNSGIEACRMACGGHGYSHCSGLPNIYVTFTPTCTFEGENTVMMLQTARFLMKSYDQVHSGKLVGGMVSYLNDLPSQRIQPQQVAAWPAMVDINNPDSLTEAYKHRAARLVEAAARNLQAEMKHRKSKEIAWNFTSVDLVRASEAHCHYVVVKLFSGNLSKIDDKPIQAVLTNLCLLYALYGISQNSGDFLQGGILTESQLTQVNQRVKELLTLIRPESAALVDAFDFQDVSLGSVLGRYDGNIYENMFEWAKKSPLNKSEVHESYHKHLKPLQSKL.

2 positions are modified to N6-succinyllysine: lysine 89 and lysine 90. Threonine 139 provides a ligand contact to FAD. At lysine 159 the chain carries N6-succinyllysine. FAD is bound at residue glycine 178. Lysine 216 carries the post-translational modification N6-acetyllysine. Residue lysine 241 is modified to N6-succinyllysine. N6-acetyllysine is present on residues lysine 255, lysine 267, and lysine 272. Lysine 349 is modified (N6-succinyllysine). The active-site Proton acceptor is glutamate 421. N6-acetyllysine; alternate is present on residues lysine 437, lysine 446, lysine 512, and lysine 637. N6-succinyllysine; alternate is present on residues lysine 437, lysine 446, lysine 512, and lysine 637. Lysine 643 carries the N6-succinyllysine modification. Residue serine 649 is modified to Phosphoserine. The residue at position 652 (lysine 652) is an N6-acetyllysine. Residue lysine 655 is modified to N6-succinyllysine. The short motif at 659-661 (SKL) is the Microbody targeting signal element.

It belongs to the acyl-CoA oxidase family. As to quaternary structure, homodimer. Interacts with LONP2. Requires FAD as cofactor.

It is found in the peroxisome. The enzyme catalyses a 2,3-saturated acyl-CoA + O2 = a (2E)-enoyl-CoA + H2O2. It catalyses the reaction hexadecanoyl-CoA + O2 = (2E)-hexadecenoyl-CoA + H2O2. The catalysed reaction is dodecanoyl-CoA + O2 = (2E)-dodecenoyl-CoA + H2O2. It carries out the reaction octanoyl-CoA + O2 = (2E)-octenoyl-CoA + H2O2. The enzyme catalyses decanoyl-CoA + O2 = (2E)-decenoyl-CoA + H2O2. It catalyses the reaction tetradecanoyl-CoA + O2 = (2E)-tetradecenoyl-CoA + H2O2. The catalysed reaction is hexadecanedioyl-CoA + O2 = (2E)-hexadecenedioyl-CoA + H2O2. It carries out the reaction tetracosanoyl-CoA + O2 = (2E)-tetracosenoyl-CoA + H2O2. The enzyme catalyses glutaryl-CoA + O2 = (2E)-glutaconyl-CoA + H2O2. It catalyses the reaction hexanoyl-CoA + O2 = (2E)-hexenoyl-CoA + H2O2. The catalysed reaction is octadecanoyl-CoA + O2 = (2E)-octadecenoyl-CoA + H2O2. It carries out the reaction (5Z,8Z,11Z,14Z,17Z)-eicosapentaenoyl-CoA + O2 = (2E,5Z,8Z,11Z,14Z,17Z)-icosahexaenoyl-CoA + H2O2. The enzyme catalyses (6Z,9Z,12Z,15Z,18Z,21Z)-tetracosahexaenoyl-CoA + O2 = (2E,6Z,9Z,12Z,15Z,18Z,21Z)-tetracosaheptaenoyl-CoA + H2O2. The protein operates within lipid metabolism; peroxisomal fatty acid beta-oxidation. Its function is as follows. Involved in the initial and rate-limiting step of peroxisomal beta-oxidation of straight-chain saturated and unsaturated very-long-chain fatty acids. Catalyzes the desaturation of fatty acyl-CoAs such as palmitoyl-CoA (hexadecanoyl-CoA) to 2-trans-enoyl-CoAs ((2E)-enoyl-CoAs) such as (2E)-hexadecenoyl-CoA, and donates electrons directly to molecular oxygen (O(2)), thereby producing hydrogen peroxide (H(2)O(2)). Isoform 2 shows higher activity with hexadecanoyl-CoA as substrate than isoform 1. The protein is Peroxisomal acyl-coenzyme A oxidase 1 (ACOX1) of Phascolarctos cinereus (Koala).